A 77-amino-acid chain; its full sequence is UPF0401 protein ECP_3853 (77 aa).

Belongs to the UPF0401 family.

This is UPF0401 protein ECP_3853 from Escherichia coli O6:K15:H31 (strain 536 / UPEC).